The sequence spans 569 residues: Protein GPR108 (569 aa).

An N-terminal signal peptide occupies residues 1 to 34; the sequence is MAVSERRGLSGESPTQCRWGYLSLLVLTLSGCSG. N-linked (GlcNAc...) asparagine glycans are attached at residues N59, N111, and N182. The disordered stretch occupies residues 144-219; it reads LLPEAPTQSG…DPSGKEKDQV (76 aa). The span at 180-192 shows a compositional bias: polar residues; it reads KENQTAPQVSGDK. Residues 194–203 are compositionally biased toward basic and acidic residues; sequence TPGEHRHSSE. Residues N226 and N230 are each glycosylated (N-linked (GlcNAc...) asparagine). A run of 7 helical transmembrane segments spans residues 289–309, 318–338, 362–382, 393–413, 427–447, 475–495, and 499–519; these read LYLI…SVLC, IHWL…FHSI, LLKG…WAFV, IFGI…VIES, ILFL…VWSI, VMVI…QVAV, and WQWL…VLTG.

Belongs to the LU7TM family. High expression in spleen, lung, stomach, large and small intestine, and thymus.

Its subcellular location is the golgi apparatus. The protein localises to the cis-Golgi network membrane. It is found in the trans-Golgi network membrane. It localises to the golgi apparatus membrane. Functionally, may play a role in intracellular immune modulation by activating NF-kappaB response and attenuating Toll-like-receptor response. Its function is as follows. (Microbial infection) Plays an essential function in adeno-associated virus (AAV) transduction, across multiple serotypes except AAV5. May play a critical role in mediating the endosomal virus escape or in the AAV virions trafficking from endosomes to the nucleus. The sequence is that of Protein GPR108 (Gpr108) from Mus musculus (Mouse).